A 153-amino-acid chain; its full sequence is UPF0102 protein Pnap_0271 (153 aa).

It belongs to the UPF0102 family.

In Polaromonas naphthalenivorans (strain CJ2), this protein is UPF0102 protein Pnap_0271.